The following is a 362-amino-acid chain: Spermidine/putrescine import ATP-binding protein PotA (362 aa).

The region spanning Ile4 to Ile235 is the ABC transporter domain. An ATP-binding site is contributed by Gly37 to Thr44.

It belongs to the ABC transporter superfamily. Spermidine/putrescine importer (TC 3.A.1.11.1) family. The complex is composed of two ATP-binding proteins (PotA), two transmembrane proteins (PotB and PotC) and a solute-binding protein (PotD).

The protein localises to the cell membrane. The enzyme catalyses ATP + H2O + polyamine-[polyamine-binding protein]Side 1 = ADP + phosphate + polyamineSide 2 + [polyamine-binding protein]Side 1.. In terms of biological role, part of the ABC transporter complex PotABCD involved in spermidine/putrescine import. Responsible for energy coupling to the transport system. This Lactobacillus delbrueckii subsp. bulgaricus (strain ATCC BAA-365 / Lb-18) protein is Spermidine/putrescine import ATP-binding protein PotA.